The primary structure comprises 146 residues: Hemoglobin subunit theta (146 aa).

Residues H2–H146 enclose the Globin domain. Residues H63 and H92 each contribute to the heme b site.

This sequence belongs to the globin family.

The polypeptide is Hemoglobin subunit theta (Sus scrofa (Pig)).